A 225-amino-acid chain; its full sequence is MGIKDWPEGEGPRDKLLQKGAAYLSDAELLAVLLRNGLAGLNAVDLARSLISEFGGLRNLLCAPKNQVCRLPGVGPVKYAQLQAAAELARRVAQENLQRGQVLTNPDLTRDYLMRQLTDRSYEVFAILLLDSQHRVIQFVELFRGTIDSASVYPREVVSLVLEKKAAAVIVCHNHPSGIAEPSQADRRITERLKNALATIDVSLLDHMVVGDREIVSFAERGWIN.

The region spanning 102–224 is the MPN domain; it reads VLTNPDLTRD…IVSFAERGWI (123 aa). Histidine 173, histidine 175, and aspartate 186 together coordinate Zn(2+). Residues 173–186 carry the JAMM motif motif; it reads HNHPSGIAEPSQAD.

The protein belongs to the UPF0758 family.

The sequence is that of UPF0758 protein Sputw3181_0338 from Shewanella sp. (strain W3-18-1).